The chain runs to 235 residues: tRNA (guanine-N(1)-)-methyltransferase (235 aa).

Residues Gly114 and 134–139 each bind S-adenosyl-L-methionine; that span reads IGDYIL.

The protein belongs to the RNA methyltransferase TrmD family. Homodimer.

It is found in the cytoplasm. It carries out the reaction guanosine(37) in tRNA + S-adenosyl-L-methionine = N(1)-methylguanosine(37) in tRNA + S-adenosyl-L-homocysteine + H(+). Specifically methylates guanosine-37 in various tRNAs. In Ehrlichia canis (strain Jake), this protein is tRNA (guanine-N(1)-)-methyltransferase.